The primary structure comprises 390 residues: Nuclear receptor subfamily 2 group F member 6 (390 aa).

A compositionally biased stretch (gly residues) spans 1–15 (MAMVTGGWGDPGGDT). The segment at 1–50 (MAMVTGGWGDPGGDTNGVDKAGGSYPRATEDDSASPPGATSDAEPGDEER) is disordered. Residues Ser-35 and Ser-41 each carry the phosphoserine modification. The nuclear receptor DNA-binding region spans 54 to 129 (QVDCVVCGDK…VGMRKEAVQR (76 aa)). The segment at 57–77 (CVVCGDKSSGKHYGVFTCEGC) adopts an NR C4-type zinc-finger fold. Ser-84 carries the phosphoserine modification. An NR C4-type zinc finger spans residues 93-117 (CRSNRDCQIDQHHRNQCQYCRLKKC). An NR LBD domain is found at 157 to 380 (PVSELIAQLL…TLIRDMLLSG (224 aa)). An important for dimerization region spans residues 314–390 (LQEKAQVALT…STFNWPYGSG (77 aa)).

It belongs to the nuclear hormone receptor family. NR2 subfamily. As to quaternary structure, binds DNA as dimer; homodimer and heterodimer with NR2F2 and probably NR2F1. Interacts with THRB.

It localises to the nucleus. In terms of biological role, transcription factor predominantly involved in transcriptional repression. Binds to promoter/enhancer response elements that contain the imperfect 5'-AGGTCA-3' direct or inverted repeats with various spacings which are also recognized by other nuclear hormone receptors. Involved in modulation of hormonal responses. Represses transcriptional activity of the lutropin-choriogonadotropic hormone receptor/LHCGR gene, the renin/REN gene and the oxytocin-neurophysin/OXT gene. Represses the triiodothyronine-dependent and -independent transcriptional activity of the thyroid hormone receptor gene in a cell type-specific manner. The corepressing function towards thyroid hormone receptor beta/THRB involves at least in part the inhibition of THRB binding to triiodothyronine response elements (TREs) by NR2F6. Inhibits NFATC transcription factor DNA binding and subsequently its transcriptional activity. Acts as transcriptional repressor of IL-17 expression in Th-17 differentiated CD4(+) T cells and may be involved in induction and/or maintenance of peripheral immunological tolerance and autoimmunity. Involved in development of forebrain circadian clock; is required early in the development of the locus coeruleus (LC). The protein is Nuclear receptor subfamily 2 group F member 6 (Nr2f6) of Mus musculus (Mouse).